The primary structure comprises 337 residues: Large ribosomal subunit protein uL3 (337 aa).

The segment at Met-1–Lys-26 is disordered.

It belongs to the universal ribosomal protein uL3 family. As to quaternary structure, part of the 50S ribosomal subunit. Forms a cluster with proteins L14 and L24e.

Its function is as follows. One of the primary rRNA binding proteins, it binds directly near the 3'-end of the 23S rRNA, where it nucleates assembly of the 50S subunit. The polypeptide is Large ribosomal subunit protein uL3 (Methanocella arvoryzae (strain DSM 22066 / NBRC 105507 / MRE50)).